Reading from the N-terminus, the 352-residue chain is UDP-N-acetylglucosamine--N-acetylmuramyl-(pentapeptide) pyrophosphoryl-undecaprenol N-acetylglucosamine transferase 2 (352 aa).

UDP-N-acetyl-alpha-D-glucosamine-binding positions include 11–13 (SAG), Arg-164, Ser-194, and Gln-289.

This sequence belongs to the glycosyltransferase 28 family. MurG subfamily.

The protein localises to the cell membrane. It carries out the reaction di-trans,octa-cis-undecaprenyl diphospho-N-acetyl-alpha-D-muramoyl-L-alanyl-D-glutamyl-meso-2,6-diaminopimeloyl-D-alanyl-D-alanine + UDP-N-acetyl-alpha-D-glucosamine = di-trans,octa-cis-undecaprenyl diphospho-[N-acetyl-alpha-D-glucosaminyl-(1-&gt;4)]-N-acetyl-alpha-D-muramoyl-L-alanyl-D-glutamyl-meso-2,6-diaminopimeloyl-D-alanyl-D-alanine + UDP + H(+). It participates in cell wall biogenesis; peptidoglycan biosynthesis. Functionally, cell wall formation. Catalyzes the transfer of a GlcNAc subunit on undecaprenyl-pyrophosphoryl-MurNAc-pentapeptide (lipid intermediate I) to form undecaprenyl-pyrophosphoryl-MurNAc-(pentapeptide)GlcNAc (lipid intermediate II). The chain is UDP-N-acetylglucosamine--N-acetylmuramyl-(pentapeptide) pyrophosphoryl-undecaprenol N-acetylglucosamine transferase 2 from Bacillus anthracis.